Here is a 250-residue protein sequence, read N- to C-terminus: uncharacterized protein (250 aa).

This sequence to class-3 of adenylyl cyclases.

This is an uncharacterized protein from Mycobacterium tuberculosis (strain ATCC 25618 / H37Rv).